Consider the following 378-residue polypeptide: Probable dihydroorotase-like protein (378 aa).

Belongs to the metallo-dependent hydrolases superfamily. DHOase family. PyrC' subfamily.

Its function is as follows. Non-functional DHOase. This Helicobacter pylori (strain J99 / ATCC 700824) (Campylobacter pylori J99) protein is Probable dihydroorotase-like protein (pyrC').